The sequence spans 95 residues: Putative regulatory protein Daud_1598 (95 aa).

The protein belongs to the RemA family.

In Desulforudis audaxviator (strain MP104C), this protein is Putative regulatory protein Daud_1598.